Here is a 268-residue protein sequence, read N- to C-terminus: NADPH-dependent 7-cyano-7-deazaguanine reductase (268 aa).

79–81 (VES) provides a ligand contact to substrate. 81-82 (SK) is a binding site for NADPH. Cysteine 176 serves as the catalytic Thioimide intermediate. The Proton donor role is filled by aspartate 183. 215-216 (HE) serves as a coordination point for substrate. Residue 244-245 (RG) participates in NADPH binding.

It belongs to the GTP cyclohydrolase I family. QueF type 2 subfamily. In terms of assembly, homodimer.

Its subcellular location is the cytoplasm. It carries out the reaction 7-aminomethyl-7-carbaguanine + 2 NADP(+) = 7-cyano-7-deazaguanine + 2 NADPH + 3 H(+). It functions in the pathway tRNA modification; tRNA-queuosine biosynthesis. Functionally, catalyzes the NADPH-dependent reduction of 7-cyano-7-deazaguanine (preQ0) to 7-aminomethyl-7-deazaguanine (preQ1). The chain is NADPH-dependent 7-cyano-7-deazaguanine reductase from Saccharophagus degradans (strain 2-40 / ATCC 43961 / DSM 17024).